A 312-amino-acid chain; its full sequence is MRVILAPMQGVLDPFVRQLLTQVNQYDLCVSEFVRVVDQLLPTKVFYRLCPELYQQGLTASGTPVRVQLLGQHPQWLAENAQRAIELGSHGIDLNCGCPSKTVNGSNGGASLLKQPELIYHATKALRAAVPKALPVSVKVRLGWDNSEQAFEIADAVQQGGATEITIHGRTKMDGYRADRINWAKINDVRQRLSIPVIANGEIWDWQSGQACLAETGCQDLMIGRGALNIPNLSQVVKFNQAKMPWAEVLILLHQYAHTENQFDTGFYHVARIKQWLGYLKKAYPQADALFQLIKTCHDGQALRMKIDGVMN.

FMN is bound by residues 7–9 (PMQ) and Gln68. Cys98 (proton donor) is an active-site residue. FMN-binding positions include Lys139, 200–202 (NGE), and 224–225 (GR).

This sequence belongs to the Dus family. DusC subfamily. FMN serves as cofactor.

The enzyme catalyses 5,6-dihydrouridine(16) in tRNA + NADP(+) = uridine(16) in tRNA + NADPH + H(+). The catalysed reaction is 5,6-dihydrouridine(16) in tRNA + NAD(+) = uridine(16) in tRNA + NADH + H(+). Its function is as follows. Catalyzes the synthesis of 5,6-dihydrouridine (D), a modified base found in the D-loop of most tRNAs, via the reduction of the C5-C6 double bond in target uridines. Specifically modifies U16 in tRNAs. This Pasteurella multocida (strain Pm70) protein is tRNA-dihydrouridine(16) synthase.